A 205-amino-acid chain; its full sequence is MSAIAPGMILFAYLCGSISSAILVCRLCGLPDPRTSGSGNPGATNVLRMGGKGAALAVLIFDVLKGMLPVWGAYELGVSPFWLGLIAIAACLGHIWPIFFGFKGGKGVATAFGAIAPIGWDLTGVMAGTWLLTVLLSGYSSLGAIVSALIAPFYVWWFKPQFTFPVSMLSCLILLRHHDNIQRLWRRQETKIWTKLKRKREKDPE.

At 1–3 (MSA) the chain is on the periplasmic side. Residues 4-24 (IAPGMILFAYLCGSISSAILV) traverse the membrane as a helical segment. Residues 25-52 (CRLCGLPDPRTSGSGNPGATNVLRMGGK) lie on the Cytoplasmic side of the membrane. The helical transmembrane segment at 53–73 (GAALAVLIFDVLKGMLPVWGA) threads the bilayer. Topologically, residues 74–80 (YELGVSP) are periplasmic. Residues 81–101 (FWLGLIAIAACLGHIWPIFFG) form a helical membrane-spanning segment. The Cytoplasmic portion of the chain corresponds to 102 to 111 (FKGGKGVATA). A helical membrane pass occupies residues 112–132 (FGAIAPIGWDLTGVMAGTWLL). The Periplasmic portion of the chain corresponds to 133 to 137 (TVLLS). Residues 138-158 (GYSSLGAIVSALIAPFYVWWF) form a helical membrane-spanning segment. Residues 159–205 (KPQFTFPVSMLSCLILLRHHDNIQRLWRRQETKIWTKLKRKREKDPE) lie on the Cytoplasmic side of the membrane.

It belongs to the PlsY family. In terms of assembly, probably interacts with PlsX.

Its subcellular location is the cell inner membrane. The enzyme catalyses sn-glycerol 3-phosphate + an acyl-CoA = a 1-acyl-sn-glycero-3-phosphate + CoA. The catalysed reaction is a fatty acyl-[ACP] + sn-glycerol 3-phosphate = a 1-acyl-sn-glycero-3-phosphate + holo-[ACP]. It functions in the pathway lipid metabolism; phospholipid metabolism. Catalyzes the transfer of an acyl group from acyl-ACP to glycerol-3-phosphate (G3P) to form lysophosphatidic acid (LPA). This enzyme can also utilize acyl-CoA as fatty acyl donor, but not acyl-PO(4). The sequence is that of Glycerol-3-phosphate acyltransferase from Escherichia fergusonii (strain ATCC 35469 / DSM 13698 / CCUG 18766 / IAM 14443 / JCM 21226 / LMG 7866 / NBRC 102419 / NCTC 12128 / CDC 0568-73).